Here is a 155-residue protein sequence, read N- to C-terminus: Aspartate carbamoyltransferase regulatory chain (155 aa).

The Zn(2+) site is built by cysteine 110, cysteine 115, cysteine 139, and cysteine 142.

It belongs to the PyrI family. In terms of assembly, contains catalytic and regulatory chains. Zn(2+) serves as cofactor.

Functionally, involved in allosteric regulation of aspartate carbamoyltransferase. This chain is Aspartate carbamoyltransferase regulatory chain, found in Yersinia pestis bv. Antiqua (strain Antiqua).